The primary structure comprises 637 residues: tRNA uridine 5-carboxymethylaminomethyl modification enzyme MnmG (637 aa).

FAD-binding positions include 15 to 20 (GAGHAG), isoleucine 127, and serine 182. 276–290 (GPRYCPSIEDKIVRF) provides a ligand contact to NAD(+). Glutamine 373 serves as a coordination point for FAD.

The protein belongs to the MnmG family. As to quaternary structure, homodimer. Heterotetramer of two MnmE and two MnmG subunits. FAD is required as a cofactor.

The protein resides in the cytoplasm. Its function is as follows. NAD-binding protein involved in the addition of a carboxymethylaminomethyl (cmnm) group at the wobble position (U34) of certain tRNAs, forming tRNA-cmnm(5)s(2)U34. This is tRNA uridine 5-carboxymethylaminomethyl modification enzyme MnmG from Streptococcus pneumoniae (strain ATCC BAA-255 / R6).